The following is a 493-amino-acid chain: Adenylyltransferase and sulfurtransferase uba4 (493 aa).

ATP contacts are provided by residues Gly-99, Asp-120, 127–131 (SNLHR), Lys-144, and 188–189 (DN). Cys-237 and Cys-240 together coordinate Zn(2+). The active-site Glycyl thioester intermediate; for adenylyltransferase activity is Cys-254. 2 residues coordinate Zn(2+): Cys-316 and Cys-319. The Rhodanese domain occupies 376–491 (INKEPTIIDV…WREQIDPDWP (116 aa)). The Cysteine persulfide intermediate; for sulfurtransferase activity role is filled by Cys-446.

This sequence in the N-terminal section; belongs to the HesA/MoeB/ThiF family. UBA4 subfamily. Zn(2+) serves as cofactor.

Its subcellular location is the cytoplasm. It localises to the cytosol. It carries out the reaction [molybdopterin-synthase sulfur-carrier protein]-C-terminal Gly-Gly + ATP + H(+) = [molybdopterin-synthase sulfur-carrier protein]-C-terminal Gly-Gly-AMP + diphosphate. The catalysed reaction is [molybdopterin-synthase sulfur-carrier protein]-C-terminal Gly-Gly-AMP + S-sulfanyl-L-cysteinyl-[cysteine desulfurase] + AH2 = [molybdopterin-synthase sulfur-carrier protein]-C-terminal-Gly-aminoethanethioate + L-cysteinyl-[cysteine desulfurase] + A + AMP + 2 H(+). It participates in tRNA modification; 5-methoxycarbonylmethyl-2-thiouridine-tRNA biosynthesis. It functions in the pathway cofactor biosynthesis; molybdopterin biosynthesis. Its function is as follows. Plays a central role in 2-thiolation of mcm(5)S(2)U at tRNA wobble positions of cytosolic tRNA(Lys), tRNA(Glu) and tRNA(Gln). Also essential during biosynthesis of the molybdenum cofactor. Acts by mediating the C-terminal thiocarboxylation of sulfur carriers urm1 and mocs2a. Its N-terminus first activates urm1 and mocs2a as acyl-adenylates (-COAMP), then the persulfide sulfur on the catalytic cysteine is transferred to urm1 and mocs2a to form thiocarboxylation (-COSH) of their C-terminus. The reaction probably involves hydrogen sulfide that is generated from the persulfide intermediate and that acts as a nucleophile towards urm1 and mocs2a. Subsequently, a transient disulfide bond is formed. Does not use thiosulfate as sulfur donor; nfs1 probably acting as a sulfur donor for thiocarboxylation reactions. This chain is Adenylyltransferase and sulfurtransferase uba4, found in Aspergillus fumigatus (strain CBS 144.89 / FGSC A1163 / CEA10) (Neosartorya fumigata).